A 452-amino-acid polypeptide reads, in one-letter code: Maltoporin (452 aa).

The first 25 residues, 1–25, serve as a signal peptide directing secretion; it reads MMITLRKLPLAVAVAAGVMSAQAMA.

This sequence belongs to the porin LamB (TC 1.B.3) family. Homotrimer formed of three 18-stranded antiparallel beta-barrels, containing three independent channels.

The protein localises to the cell outer membrane. It catalyses the reaction beta-maltose(in) = beta-maltose(out). Involved in the transport of maltose and maltodextrins. In Salmonella enteritidis PT4 (strain P125109), this protein is Maltoporin.